The chain runs to 924 residues: DNA repair and recombination protein RDH54 (924 aa).

A compositionally biased stretch (basic and acidic residues) spans 1-10 (MQIPKYENKP). 2 disordered regions span residues 1 to 21 (MQIP…GSNK) and 155 to 183 (EALS…NDGG). Over residues 168–178 (TTSTTETVPST) the composition is skewed to low complexity. The Helicase ATP-binding domain occupies 299–487 (LENDSDISGC…FTIIDFINPG (189 aa)). 346-353 (IPLTGLCK) contributes to the ATP binding site. A DEGH box motif is present at residues 472 to 475 (NDLN). Residue K615 forms a Glycyl lysine isopeptide (Lys-Gly) (interchain with G-Cter in ubiquitin) linkage. Residues 631–790 (KLRVLMTLLE…DSEMRNKESS (160 aa)) form the Helicase C-terminal domain.

It belongs to the SNF2/RAD54 helicase family. In terms of assembly, interacts with RAD51 and DMC1.

The protein resides in the nucleus. It catalyses the reaction ATP + H2O = ADP + phosphate + H(+). Involved in the recombinational repair of double-strand breaks (DSB) in DNA during mitosis and meiosis. Has DNA dependent ATPase activity. Promotes D-loop (displacement loop) formation with RAD51 recombinase. Modifies the topology of double-stranded DNA during the D-loop reaction to facilitate the invasion of the homologous duplex molecule by the initiating single-stranded DNA substrate. Required for adaptation from G2/M checkpoint arrest induced by a double strand break, by participating in monitoring the extent of single-stranded DNA produced by resection of DNA ends. This role is distinct from its roles in recombination. Promotes colocalization of RAD51 and DMC1 during meiotic recombination. Involved in crossover interference. In Saccharomyces cerevisiae (strain YJM789) (Baker's yeast), this protein is DNA repair and recombination protein RDH54 (RDH54).